The following is a 110-amino-acid chain: MGQNDLVKTLRMNYLFDFYQSLLTNKQRNYLELFYLEDYSLSEIADTFNVSRQAVYDNIRRTGDLVEDYEKKLELYQKFEQRREIYDEMKQHLSNPEQIQRYIQQLEDLE.

This sequence belongs to the UPF0122 family.

Might take part in the signal recognition particle (SRP) pathway. This is inferred from the conservation of its genetic proximity to ftsY/ffh. May be a regulatory protein. The polypeptide is UPF0122 protein SaurJH9_1295 (Staphylococcus aureus (strain JH9)).